The chain runs to 72 residues: MSKEDSFEMEGTVADTLPNTMFRVELENGHVVTAHISGKMRKNYIRILTGDKVRVELTPYDLSKGRITYRAR.

The S1-like domain occupies 1–72; the sequence is MSKEDSFEME…SKGRITYRAR (72 aa).

The protein belongs to the IF-1 family. In terms of assembly, component of the 30S ribosomal translation pre-initiation complex which assembles on the 30S ribosome in the order IF-2 and IF-3, IF-1 and N-formylmethionyl-tRNA(fMet); mRNA recruitment can occur at any time during PIC assembly.

The protein localises to the cytoplasm. In terms of biological role, one of the essential components for the initiation of protein synthesis. Stabilizes the binding of IF-2 and IF-3 on the 30S subunit to which N-formylmethionyl-tRNA(fMet) subsequently binds. Helps modulate mRNA selection, yielding the 30S pre-initiation complex (PIC). Upon addition of the 50S ribosomal subunit IF-1, IF-2 and IF-3 are released leaving the mature 70S translation initiation complex. In Pseudomonas syringae pv. tomato (strain ATCC BAA-871 / DC3000), this protein is Translation initiation factor IF-1.